A 258-amino-acid polypeptide reads, in one-letter code: MKKTATPKLRLLLSNDDGVYAKGLAILAKTLADLGEVDVVAPDRNRSGASNSLTLNAPLHIKNLENGMISVEGTPTDCVHLAITGVLPEMPDMVVAGINAGPNLGDDVWYSGTVAAAMEGRFLGLPALAVSLGGELFRYYETAAKVVYQLIQRIEKDPLPPSTILNINVPDLPYEELKGFEVTRLGTRHRAEPTIRQIDPRGHPIYWVGAAGPEQDSGPGTDFFAMNHHCVSITPLRVDLTHYEAFDQLASWVKRLEM.

A divalent metal cation-binding residues include Asp-16, Asp-17, Ser-47, and Asn-99.

This sequence belongs to the SurE nucleotidase family. A divalent metal cation serves as cofactor.

The protein localises to the cytoplasm. It carries out the reaction a ribonucleoside 5'-phosphate + H2O = a ribonucleoside + phosphate. Its function is as follows. Nucleotidase that shows phosphatase activity on nucleoside 5'-monophosphates. This Coxiella burnetii (strain CbuK_Q154) (Coxiella burnetii (strain Q154)) protein is 5'-nucleotidase SurE.